The chain runs to 415 residues: Peptide chain release factor subunit 1 (415 aa).

Belongs to the eukaryotic release factor 1 family. In terms of assembly, heterodimer of two subunits, one of which binds GTP.

The protein resides in the cytoplasm. Functionally, directs the termination of nascent peptide synthesis (translation) in response to the termination codons UAA, UAG and UGA. The chain is Peptide chain release factor subunit 1 from Thermococcus sibiricus (strain DSM 12597 / MM 739).